The primary structure comprises 319 residues: Ribosomal RNA small subunit methyltransferase H (319 aa).

Residues 38 to 40 (GGH), Asp-58, Phe-82, Asp-104, and Gln-111 contribute to the S-adenosyl-L-methionine site.

This sequence belongs to the methyltransferase superfamily. RsmH family.

The protein resides in the cytoplasm. The enzyme catalyses cytidine(1402) in 16S rRNA + S-adenosyl-L-methionine = N(4)-methylcytidine(1402) in 16S rRNA + S-adenosyl-L-homocysteine + H(+). Functionally, specifically methylates the N4 position of cytidine in position 1402 (C1402) of 16S rRNA. This Histophilus somni (strain 129Pt) (Haemophilus somnus) protein is Ribosomal RNA small subunit methyltransferase H.